The sequence spans 104 residues: ATP-dependent Clp protease adapter protein ClpS (104 aa).

Belongs to the ClpS family. As to quaternary structure, binds to the N-terminal domain of the chaperone ClpA.

In terms of biological role, involved in the modulation of the specificity of the ClpAP-mediated ATP-dependent protein degradation. The polypeptide is ATP-dependent Clp protease adapter protein ClpS (Neisseria gonorrhoeae (strain ATCC 700825 / FA 1090)).